The sequence spans 129 residues: Protachykinin-1 (129 aa).

The N-terminal stretch at Met-1 to Ala-19 is a signal peptide. A propeptide spanning residues Glu-20–Ala-56 is cleaved from the precursor. Met-68 and Met-107 each carry methionine amide.

The protein belongs to the tachykinin family. The substance P form is cleaved at Pro-59 by the prolyl endopeptidase FAP (seprase) activity (in vitro). Substance P is also cleaved and degraded by Angiotensin-converting enzyme (ACE) and neprilysin (MME).

It is found in the secreted. Functionally, tachykinins are active peptides which excite neurons, evoke behavioral responses, are potent vasodilators and secretagogues, and contract (directly or indirectly) many smooth muscles. This chain is Protachykinin-1 (TAC1), found in Homo sapiens (Human).